The primary structure comprises 241 residues: 3-deoxy-D-manno-octulosonic acid kinase (241 aa).

The active site involves D171.

It belongs to the protein kinase superfamily. KdkA/RfaP family.

The protein resides in the cell inner membrane. It catalyses the reaction an alpha-Kdo-(2-&gt;6)-lipid IVA + ATP = a 4-O-phospho-alpha-Kdo-(2-&gt;6)-lipid IVA + ADP + H(+). It functions in the pathway bacterial outer membrane biogenesis; LPS core biosynthesis. Catalyzes the ATP-dependent phosphorylation of the 3-deoxy-D-manno-octulosonic acid (Kdo) residue in Kdo-lipid IV(A) at the 4-OH position. The polypeptide is 3-deoxy-D-manno-octulosonic acid kinase (Haemophilus influenzae (strain PittEE)).